We begin with the raw amino-acid sequence, 328 residues long: Sulfate adenylyltransferase subunit 2 (328 aa).

The segment at 305–328 is disordered; sequence ERQGRVIDRDSTGSMERKKAEGYF.

This sequence belongs to the PAPS reductase family. CysD subfamily. In terms of assembly, heterodimer composed of CysD, the smaller subunit, and CysN.

The catalysed reaction is sulfate + ATP + H(+) = adenosine 5'-phosphosulfate + diphosphate. It participates in sulfur metabolism; hydrogen sulfide biosynthesis; sulfite from sulfate: step 1/3. Functionally, with CysN forms the ATP sulfurylase (ATPS) that catalyzes the adenylation of sulfate producing adenosine 5'-phosphosulfate (APS) and diphosphate, the first enzymatic step in sulfur assimilation pathway. APS synthesis involves the formation of a high-energy phosphoric-sulfuric acid anhydride bond driven by GTP hydrolysis by CysN coupled to ATP hydrolysis by CysD. In Rhodopseudomonas palustris (strain BisB18), this protein is Sulfate adenylyltransferase subunit 2.